The chain runs to 256 residues: Hydroxyacylglutathione hydrolase (256 aa).

Zn(2+) is bound by residues H57, H59, D61, H62, H115, D134, and H172.

This sequence belongs to the metallo-beta-lactamase superfamily. Glyoxalase II family. In terms of assembly, monomer. Zn(2+) serves as cofactor.

The enzyme catalyses an S-(2-hydroxyacyl)glutathione + H2O = a 2-hydroxy carboxylate + glutathione + H(+). It functions in the pathway secondary metabolite metabolism; methylglyoxal degradation; (R)-lactate from methylglyoxal: step 2/2. Thiolesterase that catalyzes the hydrolysis of S-D-lactoyl-glutathione to form glutathione and D-lactic acid. The polypeptide is Hydroxyacylglutathione hydrolase (Rhizobium etli (strain ATCC 51251 / DSM 11541 / JCM 21823 / NBRC 15573 / CFN 42)).